The primary structure comprises 543 residues: MAKEIKFSENARHSLLKGVDKLADTVKTTLGPKGRNVVLEKSYGAPDITNDGVTIAKSIELENHFENMGAKLVSEAAQKTNDIAGDGTTTATVLTQAIVREGMKNVTAGANPVGIRRGIETATKAAVDELHKISHKVSTKDEIAQVASVSSASTEVGNLIADAMEKVGHDGVITIEESKGIDTELSVVEGMQFDRGYLSQYMVTDNDKMEADLDNPYILITDKKISNIQDILPLLQEIVQQGKSLLIIADDVDGEALPTLVLNKIRGTFNVVAVKAPGFGDRRKAMLEDIAILTGGTVISSDLGLELKDTKIDQLGKAGKVTVTKDSTTIVEGAGSKEAIAERVDQIKKQIADTTSDFDREKLQERLAKLAGGVAVIKVGAATETELKERKYRIEDALNATRAAVEEGYVAGGGTALVDVMKSIQGTVKGDSEDAETGVKIVMKALGAPVRQIAENAGKDGAVILDHLEHEDPEVGYNAATNKWENMVKAGIIDPTKVTRSALQNAASIAALLLTTEAVVADAPEDDKNQAPAAPNPGMGMGM.

Residues Thr-29 to Pro-32, Asp-86 to Thr-90, Gly-413, Asn-478 to Ala-480, and Asp-494 contribute to the ATP site.

This sequence belongs to the chaperonin (HSP60) family. As to quaternary structure, forms a cylinder of 14 subunits composed of two heptameric rings stacked back-to-back. Interacts with the co-chaperonin GroES.

Its subcellular location is the cytoplasm. It catalyses the reaction ATP + H2O + a folded polypeptide = ADP + phosphate + an unfolded polypeptide.. Together with its co-chaperonin GroES, plays an essential role in assisting protein folding. The GroEL-GroES system forms a nano-cage that allows encapsulation of the non-native substrate proteins and provides a physical environment optimized to promote and accelerate protein folding. This Lactobacillus johnsonii (strain CNCM I-12250 / La1 / NCC 533) protein is Chaperonin GroEL.